A 421-amino-acid polypeptide reads, in one-letter code: E3 ubiquitin-protein ligase RMD5 (421 aa).

The region spanning 176–236 (EFIEMGQIVH…QIVKHGNPVE (61 aa)) is the CTLH domain. The segment at 361–404 (CPVLKEETTTENPPYSLACHHIISKKALDRLSKNGTITFKCPYC) adopts an RING-Gid-type zinc-finger fold.

This sequence belongs to the RMD5/GID2 family. As to quaternary structure, identified in the GID/CTLH complex. In the absence of stress, the complex exists as an inactive anticipatory complex (GID(Ant)), composed of VID30/GID1, the E3 ubiquitin-ligase RMD5/GID2, VID28/GID5, GID8, and the RING-like subunit FYV10/GID9, awaiting a substrate receptor to form the active E3 ligase complex. When cells are shifted to glucose-containing medium, the substrate receptor VID24/GID4 is induced and becomes part of the complex, named GID(SR4). Additionally, GID7 transforms the GID(SR4) E3 ligase core into a higher-order supramolecular assembly (Chelator-GID(SR4)) specifically tailored for FBP1 ubiquitination. Under osmotic or heat stress, the substrate receptor GID10 is induced and becomes part of the complex, named GID(SR10). Within the GID complex, interacts directly with GID8, FYV10/GID9 and VID28/GID5.

The protein localises to the cytoplasm. It catalyses the reaction S-ubiquitinyl-[E2 ubiquitin-conjugating enzyme]-L-cysteine + [acceptor protein]-L-lysine = [E2 ubiquitin-conjugating enzyme]-L-cysteine + N(6)-ubiquitinyl-[acceptor protein]-L-lysine.. Its pathway is protein modification; protein ubiquitination. Functionally, E3 ubiquitin-protein ligase component of the GID E3 ligase complex recruiting N termini and catalyzing ubiquitination of proteins targeted for degradation. GID E3 is regulated through assembly with interchangeable N-degron-binding substrate receptors induced by distinct environmental perturbations. Required for the adaptation to the presence of glucose in the growth medium; mediates in association with the substrate receptor VID24/GID4 the degradation of enzymes involved in gluconeogenesis when cells are shifted to glucose-containing medium. Required for proteasome-dependent catabolite degradation of fructose-1,6-bisphosphatase (FBP1), malate dehydrogenase (MDH2), and other gluconeogenic enzymes. In Saccharomyces cerevisiae (strain ATCC 204508 / S288c) (Baker's yeast), this protein is E3 ubiquitin-protein ligase RMD5.